A 445-amino-acid chain; its full sequence is Histamine H3 receptor (445 aa).

The Extracellular portion of the chain corresponds to 1 to 39 (MERAPPDGPLNASGALAGEAAAAGGARGFSAAWTAVLAA). N-linked (GlcNAc...) asparagine glycosylation is present at asparagine 11. The chain crosses the membrane as a helical span at residues 40–60 (LMALLIVATVLGNALVMLAFV). Topologically, residues 61-70 (ADSSLRTQNN) are cytoplasmic. Residues 71–91 (FFLLNLAISDFLVGAFCIPLY) traverse the membrane as a helical segment. Residues 92-108 (VPYVLTGRWTFGRGLCK) are Extracellular-facing. A disulfide bridge links cysteine 107 with cysteine 188. Residues 109 to 129 (LWLVVDYLLCTSSAFNIVLIS) traverse the membrane as a helical segment. At 130–156 (YDRFLSVTRAVSYRAQQGDTRRAVRKM) the chain is on the cytoplasmic side. The helical transmembrane segment at 157–177 (LLVWVLAFLLYGPAILSWEYL) threads the bilayer. The Extracellular segment spans residues 178–196 (SGGSSIPEGHCYAEFFYNW). A helical membrane pass occupies residues 197–217 (YFLITASTLEFFTPFLSVTFF). At 218-359 (NLSIYLNIQR…LSRDRKVAKS (142 aa)) the chain is on the cytoplasmic side. Disordered stretches follow at residues 237–260 (REAAGPEPPPEAQPSPPPPPGCWG) and 288–336 (EATL…LEKR). Residues 242 to 257 (PEPPPEAQPSPPPPPG) show a composition bias toward pro residues. Residues 290 to 299 (TLGGGGGGGS) show a composition bias toward gly residues. Positions 300–312 (VASPTSSSGSSSR) are enriched in low complexity. The chain crosses the membrane as a helical span at residues 360-380 (LAVIVSIFGLCWAPYTLLMII). Residues 381–395 (RAACHGHCVPDYWYE) lie on the Extracellular side of the membrane. Residues 396–416 (TSFWLLWANSAVNPVLYPLCH) traverse the membrane as a helical segment. The Cytoplasmic segment spans residues 417–445 (HSFRRAFTKLLCPQKLKIQPHSSLEHCWK). Phosphoserine is present on serine 439.

Belongs to the G-protein coupled receptor 1 family. As to expression, expressed predominantly in the CNS, with the greatest expression in the thalamus and caudate nucleus. The various isoforms are mainly coexpressed in brain, but their relative expression level varies in a region-specific manner. Isoform 3 and isoform 7 are highly expressed in the thalamus, caudate nucleus and cerebellum while isoform 5 and isoform 6 show a poor expression. Isoform 5 and isoform 6 show a high expression in the amygdala, substantia nigra, cerebral cortex and hypothalamus. Isoform 7 is not found in hypothalamus or substantia nigra.

Its subcellular location is the cell membrane. In terms of biological role, the H3 subclass of histamine receptors could mediate the histamine signals in CNS and peripheral nervous system. Signals through the inhibition of adenylate cyclase and displays high constitutive activity (spontaneous activity in the absence of agonist). Agonist stimulation of isoform 3 neither modified adenylate cyclase activity nor induced intracellular calcium mobilization. The sequence is that of Histamine H3 receptor (HRH3) from Homo sapiens (Human).